A 664-amino-acid polypeptide reads, in one-letter code: Transketolase 1 (664 aa).

Residue His-26 coordinates substrate. Thiamine diphosphate-binding positions include His-66 and 114-116 (GPL). Asp-155 contacts Mg(2+). The thiamine diphosphate site is built by Gly-156 and Asn-185. Mg(2+) is bound by residues Asn-185 and Ile-187. Positions 260, 357, and 384 each coordinate substrate. His-260 is a binding site for thiamine diphosphate. The active-site Proton donor is the Glu-411. Phe-437 provides a ligand contact to thiamine diphosphate. Substrate-binding residues include His-461, Asp-469, and Arg-520.

It belongs to the transketolase family. In terms of assembly, homodimer. Mg(2+) is required as a cofactor. It depends on Ca(2+) as a cofactor. Requires Mn(2+) as cofactor. Co(2+) serves as cofactor. The cofactor is thiamine diphosphate.

The catalysed reaction is D-sedoheptulose 7-phosphate + D-glyceraldehyde 3-phosphate = aldehydo-D-ribose 5-phosphate + D-xylulose 5-phosphate. Catalyzes the transfer of a two-carbon ketol group from a ketose donor to an aldose acceptor, via a covalent intermediate with the cofactor thiamine pyrophosphate. The protein is Transketolase 1 (tkt1) of Vibrio parahaemolyticus serotype O3:K6 (strain RIMD 2210633).